The sequence spans 344 residues: S-adenosylmethionine:tRNA ribosyltransferase-isomerase (344 aa).

It belongs to the QueA family. As to quaternary structure, monomer.

Its subcellular location is the cytoplasm. The catalysed reaction is 7-aminomethyl-7-carbaguanosine(34) in tRNA + S-adenosyl-L-methionine = epoxyqueuosine(34) in tRNA + adenine + L-methionine + 2 H(+). Its pathway is tRNA modification; tRNA-queuosine biosynthesis. In terms of biological role, transfers and isomerizes the ribose moiety from AdoMet to the 7-aminomethyl group of 7-deazaguanine (preQ1-tRNA) to give epoxyqueuosine (oQ-tRNA). The protein is S-adenosylmethionine:tRNA ribosyltransferase-isomerase of Thiobacillus denitrificans (strain ATCC 25259 / T1).